We begin with the raw amino-acid sequence, 166 residues long: Ureidoglycolate lyase (166 aa).

It belongs to the ureidoglycolate lyase family. As to quaternary structure, homodimer. The cofactor is Ni(2+).

The enzyme catalyses (S)-ureidoglycolate = urea + glyoxylate. Its pathway is nitrogen metabolism; (S)-allantoin degradation. Functionally, catalyzes the catabolism of the allantoin degradation intermediate (S)-ureidoglycolate, generating urea and glyoxylate. Involved in the utilization of allantoin as nitrogen source. The sequence is that of Ureidoglycolate lyase from Azotobacter vinelandii (strain DJ / ATCC BAA-1303).